We begin with the raw amino-acid sequence, 81 residues long: Large ribosomal subunit protein bL31B (81 aa).

Belongs to the bacterial ribosomal protein bL31 family. Type B subfamily. Part of the 50S ribosomal subunit.

This is Large ribosomal subunit protein bL31B from Bacillus licheniformis (strain ATCC 14580 / DSM 13 / JCM 2505 / CCUG 7422 / NBRC 12200 / NCIMB 9375 / NCTC 10341 / NRRL NRS-1264 / Gibson 46).